The following is a 410-amino-acid chain: Sulfate adenylyltransferase (410 aa).

It belongs to the sulfate adenylyltransferase family.

It carries out the reaction sulfate + ATP + H(+) = adenosine 5'-phosphosulfate + diphosphate. It participates in sulfur metabolism; hydrogen sulfide biosynthesis; sulfite from sulfate: step 1/3. This is Sulfate adenylyltransferase from Syntrophobacter fumaroxidans (strain DSM 10017 / MPOB).